Consider the following 300-residue polypeptide: Recombination-associated protein RdgC (300 aa).

It belongs to the RdgC family.

The protein resides in the cytoplasm. The protein localises to the nucleoid. May be involved in recombination. The protein is Recombination-associated protein RdgC of Janthinobacterium sp. (strain Marseille) (Minibacterium massiliensis).